The chain runs to 101 residues: Urease subunit beta (101 aa).

The protein belongs to the urease beta subunit family. In terms of assembly, heterotrimer of UreA (gamma), UreB (beta) and UreC (alpha) subunits. Three heterotrimers associate to form the active enzyme.

It is found in the cytoplasm. It carries out the reaction urea + 2 H2O + H(+) = hydrogencarbonate + 2 NH4(+). The protein operates within nitrogen metabolism; urea degradation; CO(2) and NH(3) from urea (urease route): step 1/1. This Hahella chejuensis (strain KCTC 2396) protein is Urease subunit beta.